Consider the following 266-residue polypeptide: Transcription factor atoh8 (266 aa).

Residues 140–164 (AASQAPAGGSERAESPRKRAGEPSG) form a disordered region. Basic and acidic residues predominate over residues 150–160 (ERAESPRKRAG). The tract at residues 175-188 (TRRLLANARERTRV) is basic motif; degenerate. The bHLH domain occupies 175–227 (TRRLLANARERTRVHTISAAFEALRKQVPCYSYGQKLSKLAILRIACNYILSL). The interval 189-227 (HTISAAFEALRKQVPCYSYGQKLSKLAILRIACNYILSL) is helix-loop-helix motif.

The protein localises to the nucleus. It is found in the nucleus speckle. The protein resides in the cytoplasm. In terms of biological role, transcription factor that binds a palindromic (canonical) core consensus DNA sequence 5'-CANNTG- 3' known as an E-box element, possibly as a heterodimer with other bHLH proteins. During development, is required for heart looping and swim bladder formation by acting in concert with GATA4 and ZFPM1. During the development of both the retina and skeletal muscles is required for neural retinal cell through modulating PAX6 and NEUROG3 expression and myogenic differentiation. This chain is Transcription factor atoh8, found in Danio rerio (Zebrafish).